Reading from the N-terminus, the 73-residue chain is Mauriporin (73 aa).

The N-terminal stretch at 1–22 is a signal peptide; the sequence is MNKKTLLVIFFITMLIVDEVNS.

Belongs to the non-disulfide-bridged peptide (NDBP) superfamily. Long chain multifunctional peptide (group 2) family. Expressed by the venom gland.

Its subcellular location is the secreted. The protein resides in the target cell membrane. Its function is as follows. Amphipathic peptide that displays potent antimicrobial activities against a range of Gram-positive and Gram-negative planktonic bacteria with MIC values in the range 5 uM to 10 uM. In more details, it is active on Listeria ivanovii (MIC=5 uM), Staphylococcus epidermidis (MIC=10 uM), Salmonella enterica (MIC=5 uM), Pseudomonas aeruginosa (ATCC 27853) (MIC=5 uM), Acinetobacter baumannii (MIC=5 uM), Klebsiella pneumoniae (MIC=5 uM), Escherichia coli (MIC=7.5 uM), Salmonella typhimurium (MIC=7.5 uM), Pseudomonas aeruginosa (ATCC 9027) (MIC=10 uM). Is also able to prevent P.aeruginosa biofilm formation while showing weak hemolytic activity towards human erythrocytes. Probably induces bacterial cell death through membrane permeabilization. Moreover, shows DNA-binding activities. Also exerts potent selective cytotoxic and antiproliferative activity against three different prostate cancer cell lines (IC(50)=4.4-7.8 uM), compared to non-tumorigenic cell lines (IC(50)=59.7 uM in Vero and 62.5 uM in HUVEC cells). This peptide possibly exerts its cytotoxic activity through a necrotic mode of cell death. Only shows diminished hemolytic activity against sheep erythrocytes. Does not induce cell death through apoptosis and consequently is not acting upon an intracellular target. This chain is Mauriporin, found in Androctonus mauritanicus (Fat-tailed scorpion).